A 97-amino-acid polypeptide reads, in one-letter code: Insertion element IS2 uncharacterized 11.1 kDa protein (97 aa).

This is Insertion element IS2 uncharacterized 11.1 kDa protein from Escherichia coli.